The following is a 287-amino-acid chain: ATP synthase gamma chain (287 aa).

The protein belongs to the ATPase gamma chain family. F-type ATPases have 2 components, CF(1) - the catalytic core - and CF(0) - the membrane proton channel. CF(1) has five subunits: alpha(3), beta(3), gamma(1), delta(1), epsilon(1). CF(0) has three main subunits: a, b and c. The F(1)F(0) complex interacts with SpoIIIJ and YqjG; YqgA is found in the same complex. Interacts with FloT.

It localises to the cell membrane. The protein localises to the membrane raft. Its function is as follows. Produces ATP from ADP in the presence of a proton gradient across the membrane. The gamma chain is believed to be important in regulating ATPase activity and the flow of protons through the CF(0) complex. The protein is ATP synthase gamma chain of Bacillus subtilis (strain 168).